Here is a 443-residue protein sequence, read N- to C-terminus: Protoheme IX farnesyltransferase, mitochondrial (443 aa).

The disordered stretch occupies residues 68 to 113; the sequence is LSQRVKPKPEPPASPFLEHTSSGQARADEDELPSFPAPSRPLSRKP. Transmembrane regions (helical) follow at residues 174-194, 230-250, 252-272, 286-306, 308-328, 363-383, and 410-430; these read AGFA…TSLG, ISPL…VALL, WGVN…YTCC, VGAV…TGSL, AGAL…FNAL, LIAL…FPVI, and LFFC…TCKQ.

Belongs to the UbiA prenyltransferase family.

The protein resides in the mitochondrion membrane. The enzyme catalyses heme b + (2E,6E)-farnesyl diphosphate + H2O = Fe(II)-heme o + diphosphate. Functionally, converts protoheme IX and farnesyl diphosphate to heme O. This Mus musculus (Mouse) protein is Protoheme IX farnesyltransferase, mitochondrial (Cox10).